A 90-amino-acid chain; its full sequence is Small ribosomal subunit protein uS15 (90 aa).

The protein belongs to the universal ribosomal protein uS15 family. In terms of assembly, part of the 30S ribosomal subunit. Forms a bridge to the 50S subunit in the 70S ribosome, contacting the 23S rRNA.

One of the primary rRNA binding proteins, it binds directly to 16S rRNA where it helps nucleate assembly of the platform of the 30S subunit by binding and bridging several RNA helices of the 16S rRNA. Its function is as follows. Forms an intersubunit bridge (bridge B4) with the 23S rRNA of the 50S subunit in the ribosome. In Tropheryma whipplei (strain TW08/27) (Whipple's bacillus), this protein is Small ribosomal subunit protein uS15.